The primary structure comprises 447 residues: 26S proteasome non-ATPase regulatory subunit 12 (447 aa).

The disordered stretch occupies residues 1 to 23 (MTIGLEPAVSSKTKDKMEQDLSP). The PCI domain occupies 240-411 (NYIEIARCYL…GIATFTTTND (172 aa)).

The protein belongs to the proteasome subunit p55 family.

Its function is as follows. Acts as a regulatory subunit of the 26S proteasome which is involved in the ATP-dependent degradation of ubiquitinated proteins. The protein is 26S proteasome non-ATPase regulatory subunit 12 (psmD12) of Dictyostelium discoideum (Social amoeba).